A 374-amino-acid polypeptide reads, in one-letter code: Chaperone protein DnaJ (374 aa).

Positions 5–70 (DYYEVLGVER…SKRAAYDQYG (66 aa)) constitute a J domain. The CR-type zinc finger occupies 133 to 211 (GTTVNIRVPT…CHGEGRVEEY (79 aa)). Zn(2+)-binding residues include Cys146, Cys149, Cys163, Cys166, Cys185, Cys188, Cys199, and Cys202. CXXCXGXG motif repeat units follow at residues 146-153 (CKPCDGSG), 163-170 (CPTCGGIG), 185-192 (CPRCHGQG), and 199-206 (CDSCHGEG).

It belongs to the DnaJ family. In terms of assembly, homodimer. Zn(2+) is required as a cofactor.

It localises to the cytoplasm. Participates actively in the response to hyperosmotic and heat shock by preventing the aggregation of stress-denatured proteins and by disaggregating proteins, also in an autonomous, DnaK-independent fashion. Unfolded proteins bind initially to DnaJ; upon interaction with the DnaJ-bound protein, DnaK hydrolyzes its bound ATP, resulting in the formation of a stable complex. GrpE releases ADP from DnaK; ATP binding to DnaK triggers the release of the substrate protein, thus completing the reaction cycle. Several rounds of ATP-dependent interactions between DnaJ, DnaK and GrpE are required for fully efficient folding. Also involved, together with DnaK and GrpE, in the DNA replication of plasmids through activation of initiation proteins. The protein is Chaperone protein DnaJ of Pseudomonas fluorescens (strain ATCC BAA-477 / NRRL B-23932 / Pf-5).